Reading from the N-terminus, the 292-residue chain is Elongation factor Ts (292 aa).

The involved in Mg(2+) ion dislocation from EF-Tu stretch occupies residues 82–85; sequence TDFV.

It belongs to the EF-Ts family.

The protein localises to the cytoplasm. Its function is as follows. Associates with the EF-Tu.GDP complex and induces the exchange of GDP to GTP. It remains bound to the aminoacyl-tRNA.EF-Tu.GTP complex up to the GTP hydrolysis stage on the ribosome. The chain is Elongation factor Ts from Bordetella parapertussis (strain 12822 / ATCC BAA-587 / NCTC 13253).